The primary structure comprises 560 residues: Vacuolar protein 8 (560 aa).

The N-myristoyl glycine moiety is linked to residue G2. C4 is lipidated: S-palmitoyl cysteine. ARM repeat units follow at residues 39–76 (NRAE…FAEI), 77–116 (TERD…NLAV), 118–157 (TDNK…NLAT), 159–198 (EENK…NMTH), 200–239 (DENR…NIAV), 243–282 (NRRK…NLAS), 284–323 (EKYQ…NISI), 325–365 (PQNE…NLAA), and 409–448 (DELK…NLSS).

Belongs to the beta-catenin family.

It is found in the vacuole membrane. Its function is as follows. Functions in both vacuole inheritance and protein targeting from the cytoplasm to vacuole. This chain is Vacuolar protein 8 (VAC8), found in Chaetomium globosum (strain ATCC 6205 / CBS 148.51 / DSM 1962 / NBRC 6347 / NRRL 1970) (Soil fungus).